The primary structure comprises 362 residues: Aspartate-semialdehyde dehydrogenase (362 aa).

T15, G16, A17, V18, S40, S43, L87, and D88 together coordinate NADP(+). C154 acts as the Acyl-thioester intermediate in catalysis. Position 186 (G186) interacts with NADP(+). The Proton acceptor role is filled by H251. N340 contributes to the NADP(+) binding site.

The protein belongs to the aspartate-semialdehyde dehydrogenase family. As to quaternary structure, homotetramer; dimer of dimers.

Its subcellular location is the cytoplasm. The protein resides in the cytosol. The protein localises to the nucleus. It carries out the reaction L-aspartate 4-semialdehyde + phosphate + NADP(+) = 4-phospho-L-aspartate + NADPH + H(+). Its pathway is amino-acid biosynthesis; L-methionine biosynthesis via de novo pathway; L-homoserine from L-aspartate: step 2/3. It functions in the pathway amino-acid biosynthesis; L-threonine biosynthesis; L-threonine from L-aspartate: step 2/5. Functionally, catalyzes the NADPH-dependent formation of L-aspartate 4-semialdehyde (L-ASA) by the reductive dephosphorylation of 4-phospho-L-aspartate. Mediates the second step in the biosynthesis of amino acids that derive from aspartate (the aspartate family of amino acids), including methioinine and threonine, the latter of which is a precursor to isoleucine. The sequence is that of Aspartate-semialdehyde dehydrogenase from Trichophyton rubrum (strain ATCC MYA-4607 / CBS 118892) (Athlete's foot fungus).